Here is a 147-residue protein sequence, read N- to C-terminus: MVHFTAEEKAVITSLWGKVNVEEAGGEALGRLLVVYPWTQRFFDNFGNLSSASAIMGNPKVKAHGKKVLTSLGDAIKNMDDLKGTFAHLSELHCDRLHVDPENFKLLGNELVIVLAKYFGKEFTPQVQAAWQKMVAGVAIALAHKYH.

The region spanning 3–147 (HFTAEEKAVI…VAIALAHKYH (145 aa)) is the Globin domain. Residues H64 and H93 each contribute to the heme b site.

It belongs to the globin family. Heterotetramer of two alpha chains and two gamma chains in fetal hemoglobin (Hb F). As to expression, red blood cells.

Its function is as follows. Gamma chains make up the fetal hemoglobin F, in combination with alpha chains. The protein is Hemoglobin subunit gamma (HBG) of Eulemur fulvus fulvus (Brown lemur).